A 101-amino-acid chain; its full sequence is Apolipoprotein C-II (101 aa).

Residues 1–22 (MGTRYFLVGFLILLVLGFEAQG) form the signal peptide. A lipid binding region spans residues 66–74 (TVDEKIRDI). The interval 78 to 101 (STAAVTTYAGIITDQVFSILSGED) is lipoprotein lipase cofactor.

This sequence belongs to the apolipoprotein C2 family. Post-translationally, proapolipoprotein C-II is synthesized as a sialic acid containing glycoprotein which is subsequently desialylated prior to its proteolytic processing. Proapolipoprotein C-II, the major form found in plasma undergoes proteolytic cleavage of its N-terminal hexapeptide to generate apolipoprotein C-II, which occurs as the minor form in plasma.

The protein localises to the secreted. Functionally, component of chylomicrons, very low-density lipoproteins (VLDL), low-density lipoproteins (LDL), and high-density lipoproteins (HDL) in plasma. Plays an important role in lipoprotein metabolism as an activator of lipoprotein lipase. Both proapolipoprotein C-II and apolipoprotein C-II can activate lipoprotein lipase. This Capra hircus aegagrus (Wild goat) protein is Apolipoprotein C-II (APOC2).